An 898-amino-acid chain; its full sequence is Putative aconitate hydratase, cytoplasmic (898 aa).

Substrate-binding positions include Gln90 and 209-211 (DSH). Positions 441, 507, and 510 each coordinate [4Fe-4S] cluster. Residues Arg540, Arg545, Arg703, and 784–785 (SR) each bind substrate.

The protein belongs to the aconitase/IPM isomerase family. [4Fe-4S] cluster is required as a cofactor.

It is found in the cytoplasm. It carries out the reaction citrate = D-threo-isocitrate. It functions in the pathway carbohydrate metabolism; glyoxylate and dicarboxylate metabolism. Functionally, catalyzes the isomerization of citrate to isocitrate via cis-aconitate. This Oryza sativa subsp. japonica (Rice) protein is Putative aconitate hydratase, cytoplasmic.